We begin with the raw amino-acid sequence, 548 residues long: SH2/SH3 adapter protein dreadlocks (548 aa).

Disordered stretches follow at residues 12-37 (IPDSSASSQQYPQQQQHPPQLPQHQN), 57-92 (QVPVPVPGSPAHHQRHSSLSQQQQLHHHRTLSTASS), and 113-146 (GSGSANGSGSGNSSSGSAAGNAGTQSMAGNMKHG). Low complexity predominate over residues 20–37 (QQYPQQQQHPPQLPQHQN). The span at 113–122 (GSGSANGSGS) shows a compositional bias: gly residues. The segment covering 123–135 (GNSSSGSAAGNAG) has biased composition (low complexity). Residues 150–209 (DDVCYVVAKYDYAAQGAQELDLRKNERYLLLDDSKHWWRVQNSRNQSGYVPSNYVKKEKP) form the SH3 1 domain. Residues 219 to 247 (VKKGSGSKTLPNCSPSRQVESPTMSRRLP) are disordered. The segment covering 227–242 (TLPNCSPSRQVESPTM) has biased composition (polar residues). SH3 domains lie at 252-311 (EAIG…EDCD) and 324-386 (NVLD…ELND). Positions 398 to 442 (SAGNGNGGGSNGGAGGGGGNDSMERRNEGNKPAAQSSGQPIERPN) are disordered. The segment covering 401-417 (NGNGGGSNGGAGGGGGN) has biased composition (gly residues). One can recognise an SH2 domain in the interval 448–542 (WYYGAITRSQ…GEKLYLVRSL (95 aa)).

In terms of assembly, interacts (via SH2 and SH3 domains) with Dscam1 (via cytoplasmic domain); the interaction is direct and requires Dscam1 to be phosphorylated. Interacts (via SH2 and SH3 domains) with InR/Insulin-like receptor (via C-terminal cytoplasmic region); the interaction requires InR kinase activity, probably for autophosphorylation stimulated by insulin signaling. Interacts with Ptp61F (via C-terminus); this interaction is independent of insulin stimulation. Interacts (via SH3 domain 2) with Pak (via N-terminal PXXP motif). In terms of processing, phosphorylated by Src42A and possibly by other tyrosine kinases. Constitutively dephosphorylated by its binding partner Ptp61F.

The protein resides in the perikaryon. Its subcellular location is the cell projection. The protein localises to the axon. It is found in the growth cone. Adapter protein that links cell surface receptor tyrosine phosphorylation to downstream signaling pathways and effectors, many of which are involved in regulation of the actin cytoskeleton. Recruited by Dscam1/Down syndrome cell adhesion molecule homolog and InR/insulin-like receptor. Recruits Pak to membranes, probably when dock/dreadlocks is associated with activated receptors. Required for guidance and targeting of photoreceptor (R cell) axon projections but not for axon outgrowth, differentiation or target induction in the developing eye. As part of a signaling pathway that involves the lbm/late bloomer protein, involved in synapse formation of the RP3 motorneuron at the muscle 7/6 cleft, probably by stimulating axon defasciculation from other SNb neurons. This chain is SH2/SH3 adapter protein dreadlocks, found in Drosophila melanogaster (Fruit fly).